Reading from the N-terminus, the 310-residue chain is Ribosomal RNA small subunit methyltransferase H (310 aa).

Residues 35–37 (GGH), Asp52, Phe79, Asp100, and Gln107 each bind S-adenosyl-L-methionine.

It belongs to the methyltransferase superfamily. RsmH family.

The protein resides in the cytoplasm. It carries out the reaction cytidine(1402) in 16S rRNA + S-adenosyl-L-methionine = N(4)-methylcytidine(1402) in 16S rRNA + S-adenosyl-L-homocysteine + H(+). Specifically methylates the N4 position of cytidine in position 1402 (C1402) of 16S rRNA. This Anaeromyxobacter dehalogenans (strain 2CP-1 / ATCC BAA-258) protein is Ribosomal RNA small subunit methyltransferase H.